We begin with the raw amino-acid sequence, 301 residues long: Acetylglutamate kinase (301 aa).

Substrate contacts are provided by residues 68-69 (GG), R90, and N195.

Belongs to the acetylglutamate kinase family. ArgB subfamily.

It is found in the cytoplasm. It catalyses the reaction N-acetyl-L-glutamate + ATP = N-acetyl-L-glutamyl 5-phosphate + ADP. Its pathway is amino-acid biosynthesis; L-arginine biosynthesis; N(2)-acetyl-L-ornithine from L-glutamate: step 2/4. Functionally, catalyzes the ATP-dependent phosphorylation of N-acetyl-L-glutamate. This chain is Acetylglutamate kinase, found in Pseudomonas putida (strain W619).